Consider the following 543-residue polypeptide: Terpineol synthase, chloroplastic (543 aa).

The tract at residues 1–22 (MNTEPSPNHYSAISSSDQNLTR) is disordered. Residues Arg263, Asp300, Asp304, Arg435, and Asn438 each contribute to the (2E)-geranyl diphosphate site. Mg(2+) is bound by residues Asp300 and Asp304. Positions 300-304 (DDVYD) match the DDXXD motif motif. Mg(2+) is bound by residues Asn438, Thr442, and Glu446.

Belongs to the terpene synthase family. Tpsb subfamily. Monomer. Requires Mg(2+) as cofactor. Mn(2+) is required as a cofactor. In terms of tissue distribution, confined to flowers.

The protein resides in the plastid. Its subcellular location is the chloroplast. It carries out the reaction (2E)-geranyl diphosphate + H2O = (S)-alpha-terpineol + diphosphate. It catalyses the reaction (2E)-geranyl diphosphate = sabinene + diphosphate. The catalysed reaction is (2E)-geranyl diphosphate = beta-myrcene + diphosphate. The enzyme catalyses (2E)-geranyl diphosphate = limonene + diphosphate. It carries out the reaction (2E)-geranyl diphosphate + H2O = 1,8-cineole + diphosphate. The protein operates within secondary metabolite biosynthesis; terpenoid biosynthesis. In terms of biological role, monoterpene synthase (TPS) involved in the biosynthesis of monoterpene natural products of the 'cineole cassette', volatile compounds present in floral scent. Catalyzes the conversion of (2E)-geranyl diphosphate (GPP) into alpha-terpineol and, as minor products, sabinene, beta-myrcene, limonene and 1,8-cineole. This chain is Terpineol synthase, chloroplastic, found in Nicotiana alata (Winged tobacco).